A 294-amino-acid polypeptide reads, in one-letter code: Nucleotide-binding protein A2cp1_0165 (294 aa).

An ATP-binding site is contributed by 17 to 24 (GVSGSGKS). Residue 68–71 (DARE) coordinates GTP.

The protein belongs to the RapZ-like family.

Its function is as follows. Displays ATPase and GTPase activities. This Anaeromyxobacter dehalogenans (strain 2CP-1 / ATCC BAA-258) protein is Nucleotide-binding protein A2cp1_0165.